The chain runs to 66 residues: Metallothionein (66 aa).

An N-acetylserine modification is found at serine 1. Cd(2+) is bound by residues cysteine 9, cysteine 13, cysteine 18, cysteine 20, cysteine 24, cysteine 26, cysteine 30, cysteine 32, cysteine 35, cysteine 38, cysteine 40, cysteine 45, cysteine 47, cysteine 51, cysteine 57, cysteine 59, cysteine 63, and cysteine 65.

Belongs to the metallothionein superfamily. Type 2 family.

Functionally, the metallothioneins are involved in the cellular sequestration of toxic metal ions and regulation of essential trace elements. The chain is Metallothionein from Arianta arbustorum (Land snail).